The sequence spans 165 residues: Small ribosomal subunit protein eS10 (165 aa).

The residue at position 12 (Y12) is a Phosphotyrosine. A disordered region spans residues 90-165; the sequence is VPATLRRSRP…FGRGRGQPPQ (76 aa). Positions 97 to 128 are enriched in basic and acidic residues; it reads SRPETGRPRPKGPEGERPARFTRGEADRDTYR. Glycyl lysine isopeptide (Lys-Gly) (interchain with G-Cter in ubiquitin) cross-links involve residues K138 and K139. S146 bears the Phosphoserine mark. R153 is modified (omega-N-methylarginine). Gly residues predominate over residues 154-165; that stretch reads GGFGRGRGQPPQ. 2 positions are modified to symmetric dimethylarginine: R158 and R160.

The protein belongs to the eukaryotic ribosomal protein eS10 family. As to quaternary structure, component of the small ribosomal subunit. The methylated form interacts with NPM1. Post-translationally, methylated by PRMT5. Methylation is necessary for its interaction with NPS1, its localization in the granular component (GC) region of the nucleolus, for the proper assembly of ribosomes, protein synthesis and optimal cell proliferation. Monoubiquitinated by ZNF598 when a ribosome has stalled during translation of poly(A) sequences, leading to preclude synthesis of a long poly-lysine tail and initiate the ribosome quality control (RQC) pathway to degrade the potentially detrimental aberrant nascent polypeptide. Deubiquitinated by OTUD3 and USP21, antagonizing ZNF598 activity. Deubiquitinated by OTUD1, antagonizing ZNF598 activity and stimulating formation of polysomes: deubiquitination by OTUD1 promotes stability and translation of a subset mRNAs with a high abundance of rare codons can limit the translation rate. Deubiquitinated by USP10.

Its subcellular location is the cytoplasm. It is found in the nucleus. It localises to the nucleolus. In terms of biological role, component of the 40S ribosomal subunit. The ribosome is a large ribonucleoprotein complex responsible for the synthesis of proteins in the cell. In Rattus norvegicus (Rat), this protein is Small ribosomal subunit protein eS10 (Rps10).